The chain runs to 473 residues: 3-isopropylmalate dehydratase large subunit 2 (473 aa).

The [4Fe-4S] cluster site is built by C350, C410, and C413.

It belongs to the aconitase/IPM isomerase family. LeuC type 1 subfamily. As to quaternary structure, heterodimer of LeuC and LeuD. It depends on [4Fe-4S] cluster as a cofactor.

It carries out the reaction (2R,3S)-3-isopropylmalate = (2S)-2-isopropylmalate. It functions in the pathway amino-acid biosynthesis; L-leucine biosynthesis; L-leucine from 3-methyl-2-oxobutanoate: step 2/4. In terms of biological role, catalyzes the isomerization between 2-isopropylmalate and 3-isopropylmalate, via the formation of 2-isopropylmaleate. This chain is 3-isopropylmalate dehydratase large subunit 2, found in Salmonella typhimurium (strain LT2 / SGSC1412 / ATCC 700720).